The following is a 613-amino-acid chain: 4-hydroxy-3-methylbut-2-en-1-yl diphosphate synthase (flavodoxin) (613 aa).

Positions 521, 524, 555, and 562 each coordinate [4Fe-4S] cluster.

This sequence belongs to the IspG family. It depends on [4Fe-4S] cluster as a cofactor.

It catalyses the reaction (2E)-4-hydroxy-3-methylbut-2-enyl diphosphate + oxidized [flavodoxin] + H2O + 2 H(+) = 2-C-methyl-D-erythritol 2,4-cyclic diphosphate + reduced [flavodoxin]. It participates in isoprenoid biosynthesis; isopentenyl diphosphate biosynthesis via DXP pathway; isopentenyl diphosphate from 1-deoxy-D-xylulose 5-phosphate: step 5/6. Functionally, converts 2C-methyl-D-erythritol 2,4-cyclodiphosphate (ME-2,4cPP) into 1-hydroxy-2-methyl-2-(E)-butenyl 4-diphosphate. This is 4-hydroxy-3-methylbut-2-en-1-yl diphosphate synthase (flavodoxin) from Bacteroides thetaiotaomicron (strain ATCC 29148 / DSM 2079 / JCM 5827 / CCUG 10774 / NCTC 10582 / VPI-5482 / E50).